A 328-amino-acid chain; its full sequence is GMP reductase (328 aa).

Residue cysteine 176 is the Thioimidate intermediate of the active site. 205–228 (IIADGGIRTHGDIAKSVRFGATMV) is an NADP(+) binding site.

This sequence belongs to the IMPDH/GMPR family. GuaC type 2 subfamily.

The enzyme catalyses IMP + NH4(+) + NADP(+) = GMP + NADPH + 2 H(+). Its function is as follows. Catalyzes the irreversible NADPH-dependent deamination of GMP to IMP. It functions in the conversion of nucleobase, nucleoside and nucleotide derivatives of G to A nucleotides, and in maintaining the intracellular balance of A and G nucleotides. This Shouchella clausii (strain KSM-K16) (Alkalihalobacillus clausii) protein is GMP reductase.